Here is a 277-residue protein sequence, read N- to C-terminus: NAD kinase (277 aa).

Asp-67 serves as the catalytic Proton acceptor. Residues 67–68 (DG), Arg-72, 137–138 (NE), Lys-148, Arg-165, Asp-167, 178–183 (TGYAMS), Leu-202, and Gln-236 contribute to the NAD(+) site.

The protein belongs to the NAD kinase family. It depends on a divalent metal cation as a cofactor.

It localises to the cytoplasm. It catalyses the reaction NAD(+) + ATP = ADP + NADP(+) + H(+). In terms of biological role, involved in the regulation of the intracellular balance of NAD and NADP, and is a key enzyme in the biosynthesis of NADP. Catalyzes specifically the phosphorylation on 2'-hydroxyl of the adenosine moiety of NAD to yield NADP. This Pyrococcus furiosus (strain ATCC 43587 / DSM 3638 / JCM 8422 / Vc1) protein is NAD kinase.